We begin with the raw amino-acid sequence, 266 residues long: Undecaprenyl-diphosphatase (266 aa).

8 consecutive transmembrane segments (helical) span residues 1–21 (METFQVILLALIQGLTEFLPI), 39–59 (QGLSFDVAVNTGSLFAVVIYF), 87–107 (WWIILATIPAVIVGFTAKDFI), 111–131 (FRNTLVIAITTIVFGLLLWAA), 144–164 (MGWKKALLIGLAQAMALIPGT), 183–203 (AAARFSFLMSVPVSFGAALLV), 218–238 (ALGLGIVVSFVAAYLCIHFFL), and 244–264 (IGMTPFVLYRLALGAILLGLL).

Belongs to the UppP family.

Its subcellular location is the cell inner membrane. It carries out the reaction di-trans,octa-cis-undecaprenyl diphosphate + H2O = di-trans,octa-cis-undecaprenyl phosphate + phosphate + H(+). In terms of biological role, catalyzes the dephosphorylation of undecaprenyl diphosphate (UPP). Confers resistance to bacitracin. The polypeptide is Undecaprenyl-diphosphatase (Shewanella frigidimarina (strain NCIMB 400)).